The following is a 951-amino-acid chain: Valine--tRNA ligase (951 aa).

The 'HIGH' region signature appears at 42 to 52 (PNVTGSLHMGH). The 'KMSKS' region signature appears at 554-558 (KMSKS). K557 serves as a coordination point for ATP. The stretch at 880–944 (AGLINKEDEL…AEAKAKLIEQ (65 aa)) forms a coiled coil.

It belongs to the class-I aminoacyl-tRNA synthetase family. ValS type 1 subfamily. In terms of assembly, monomer.

The protein localises to the cytoplasm. It catalyses the reaction tRNA(Val) + L-valine + ATP = L-valyl-tRNA(Val) + AMP + diphosphate. In terms of biological role, catalyzes the attachment of valine to tRNA(Val). As ValRS can inadvertently accommodate and process structurally similar amino acids such as threonine, to avoid such errors, it has a 'posttransfer' editing activity that hydrolyzes mischarged Thr-tRNA(Val) in a tRNA-dependent manner. The sequence is that of Valine--tRNA ligase from Salmonella paratyphi A (strain ATCC 9150 / SARB42).